A 102-amino-acid polypeptide reads, in one-letter code: MIPGEFYISHGNIELNVGRQQVLVTIINTGDRPIQIGSHFHFYEVNSALKFNRVITRGFRLNIPSGTAIRFEPGQFRTVELVKYAGACKIYGFCKAIMGKLD.

It belongs to the urease beta subunit family. As to quaternary structure, heterotrimer of UreA (gamma), UreB (beta) and UreC (alpha) subunits. Three heterotrimers associate to form the active enzyme.

Its subcellular location is the cytoplasm. The enzyme catalyses urea + 2 H2O + H(+) = hydrogencarbonate + 2 NH4(+). Its pathway is nitrogen metabolism; urea degradation; CO(2) and NH(3) from urea (urease route): step 1/1. In Blochmanniella pennsylvanica (strain BPEN), this protein is Urease subunit beta.